A 666-amino-acid polypeptide reads, in one-letter code: Mitogen-activated protein kinase kinase kinase ANP1 (666 aa).

In terms of domain architecture, Protein kinase spans 69–331 (WRKGQLIGRG…ASELLKHPFV (263 aa)). Residues 75–83 (IGRGAFGTV) and lysine 98 contribute to the ATP site. The stretch at 101-131 (LIAANFASKEKTQAHIQELEEEVKLLKNLSH) forms a coiled coil. Residues lysine 109 and lysine 111 each participate in a glycyl lysine isopeptide (Lys-Gly) (interchain with G-Cter in ubiquitin) cross-link. The active-site Proton acceptor is the aspartate 197. Over residues 452-464 (KFDESPGNGEKES) the composition is skewed to basic and acidic residues. 3 disordered regions span residues 452 to 481 (KFDE…DDDE), 536 to 592 (GFLK…DGVS), and 635 to 666 (QEIM…SPGK). Positions 538–558 (LKLPPKSRSPSRGPLGGSPSR) are enriched in low complexity. Residues 560 to 569 (TDATSCSKSP) show a composition bias toward polar residues. Residues 620–643 (KKWKEELDQELERKRQEIMRQAGL) adopt a coiled-coil conformation. A compositionally biased stretch (basic and acidic residues) spans 647-660 (PRDRGMSRQREKSR).

This sequence belongs to the protein kinase superfamily. STE Ser/Thr protein kinase family. MAP kinase kinase kinase subfamily. As to expression, expressed in roots, inflorescence stems, flower buds and flowers. Low amount in rosette and cauline leaves.

The catalysed reaction is L-seryl-[protein] + ATP = O-phospho-L-seryl-[protein] + ADP + H(+). It carries out the reaction L-threonyl-[protein] + ATP = O-phospho-L-threonyl-[protein] + ADP + H(+). May be involved in an oxidative stress-mediated signaling cascade that phosphorylates downstream MAP kinases MPK3 and MPK6. May suppress auxin signaling that promotes cell cycle. Functionally redundant to ANP2 and ANP3 in the positive regulation of cytokinesis. In Arabidopsis thaliana (Mouse-ear cress), this protein is Mitogen-activated protein kinase kinase kinase ANP1 (ANP1).